A 413-amino-acid chain; its full sequence is Intracellular hyaluronan-binding protein 4 (413 aa).

Phosphoserine occurs at positions 7 and 36. The stretch at 40 to 64 (DILREAERRRQQQLQRKRRDEAAAA) forms a coiled coil. Residues 42–206 (LREAERRRQQ…RGGPGNRVFD (165 aa)) are disordered. The span at 62–82 (AAAAGAGPRGGRSPAGASGHR) shows a compositional bias: low complexity. Residue Arg70 is modified to Omega-N-methylarginine. Ser74 carries the post-translational modification Phosphoserine. The segment covering 87 to 97 (GRRESQKERKS) has biased composition (basic and acidic residues). Phosphoserine is present on Ser108. Residues 139–182 (MLERAERRSYREYRPYETERQADFTAEKFPDEKPGDRFDRDRPL) show a composition bias toward basic and acidic residues. Positions 184–201 (GRGGPRGGMRGRGRGGPG) are enriched in gly residues. Glycyl lysine isopeptide (Lys-Gly) (interchain with G-Cter in SUMO1); alternate cross-links involve residues Lys213 and Lys276. Residues Lys213 and Lys276 each participate in a glycyl lysine isopeptide (Lys-Gly) (interchain with G-Cter in SUMO2); alternate cross-link. Positions 227–320 (VRTEDNMGGC…IRKPESTVPS (94 aa)) are disordered. The segment covering 294–315 (DEWKNLQEQTRPKPEFNIRKPE) has biased composition (basic and acidic residues). Lys336 is covalently cross-linked (Glycyl lysine isopeptide (Lys-Gly) (interchain with G-Cter in SUMO1); alternate). Lys336 participates in a covalent cross-link: Glycyl lysine isopeptide (Lys-Gly) (interchain with G-Cter in SUMO2); alternate. Phosphothreonine; by PKC is present on residues Thr354 and Thr375. A disordered region spans residues 360-413 (NFGNLPRPGRGARGGTRGGRGRIRRAENYGPRAEVVMQDVAPNPDDPEDFPALS). Residues 404 to 413 (DDPEDFPALS) are compositionally biased toward acidic residues.

It belongs to the SERBP1-HABP4 family. In terms of assembly, associates with ribosomes; promoting ribosome stabilization. Interacts with EEF2/eEF2; promoting ribosome stabilization. Interacts with FMR1. Interacts with FXR1 and FXR2. Interacts with CHD3 (via C-terminus). Interacts (via C-terminus) with RACK1. Interacts with p53/TP53. Interacts (via N-terminus) with SRSF9; this interaction is direct. Interacts with SYNCRIP; this interaction is direct. Interacts with MEF2C (via N-terminus); this interaction decreases DNA-binding activity of MEF2C in myocardial cells in response to mechanical stress. Interacts with PRMT1 (via N-terminus). Interacts with SPIN1. In terms of processing, methylated. Methylation is decreased by phorbol 12-myristate 13-acetate (PMA)-activated PKC, in vitro. Phosphorylated by phorbol 12-myristate 13-acetate (PMA)-activated PKC isoforms at Thr-354 and Thr-375. As to expression, highly expressed in brain, heart, and kidney, and moderately expressed in skeletal muscle. Also expressed in a variety of tumor cell lines and in activated but not resting leukocytes.

It localises to the nucleus. It is found in the cytoplasm. The protein resides in the stress granule. Its subcellular location is the sarcoplasm. The protein localises to the nuclear body. It localises to the nucleolus. It is found in the nucleus speckle. The protein resides in the cajal body. Its subcellular location is the gem. Its function is as follows. Ribosome-binding protein that promotes ribosome hibernation, a process during which ribosomes are stabilized in an inactive state and preserved from proteasomal degradation. Acts via its association with EEF2/eEF2 factor at the A-site of the ribosome, promoting ribosome stabilization in an inactive state compatible with storage. Plays a key role in ribosome hibernation in the mature oocyte by promoting ribosome stabilization. Ribosomes, which are produced in large quantities during oogenesis, are stored and translationally repressed in the oocyte and early embryo. Also binds RNA, regulating transcription and pre-mRNA splicing. Binds (via C-terminus) to poly(U) RNA. Seems to play a role in PML-nuclear bodies formation. Negatively regulates DNA-binding activity of the transcription factor MEF2C in myocardial cells in response to mechanical stress. The chain is Intracellular hyaluronan-binding protein 4 from Homo sapiens (Human).